The primary structure comprises 344 residues: Lipase chaperone (344 aa).

The helical transmembrane segment at 14 to 34 threads the bilayer; sequence AAIYGVVGLAAIAGVAMWSGA.

The protein belongs to the lipase chaperone family.

The protein localises to the cell inner membrane. In terms of biological role, may be involved in the folding of the extracellular lipase during its passage through the periplasm. This chain is Lipase chaperone, found in Burkholderia cenocepacia (strain HI2424).